The sequence spans 163 residues: NADH-quinone oxidoreductase subunit I (163 aa).

4Fe-4S ferredoxin-type domains are found at residues 53 to 83 (LRRYPNGEERCIACKLCEAICPAQAITIEAG) and 94 to 123 (VRYDIDMVKCIYCGFCQEACPVEAIVEGPN). Cys-63, Cys-66, Cys-69, Cys-73, Cys-103, Cys-106, Cys-109, and Cys-113 together coordinate [4Fe-4S] cluster.

This sequence belongs to the complex I 23 kDa subunit family. NDH-1 is composed of 14 different subunits. Subunits NuoA, H, J, K, L, M, N constitute the membrane sector of the complex. Requires [4Fe-4S] cluster as cofactor.

The protein resides in the cell inner membrane. The catalysed reaction is a quinone + NADH + 5 H(+)(in) = a quinol + NAD(+) + 4 H(+)(out). NDH-1 shuttles electrons from NADH, via FMN and iron-sulfur (Fe-S) centers, to quinones in the respiratory chain. The immediate electron acceptor for the enzyme in this species is believed to be ubiquinone. Couples the redox reaction to proton translocation (for every two electrons transferred, four hydrogen ions are translocated across the cytoplasmic membrane), and thus conserves the redox energy in a proton gradient. This is NADH-quinone oxidoreductase subunit I from Bartonella bacilliformis (strain ATCC 35685 / KC583 / Herrer 020/F12,63).